Consider the following 410-residue polypeptide: Protein disulfide isomerase CRELD1 (410 aa).

The signal sequence occupies residues 1 to 29; that stretch reads MGMSRRMFLTVYGSLWLLLLLSRPGVSKP. Topologically, residues 30–352 are extracellular; that stretch reads QLCQTCQNLV…GLFDDITDDE (323 aa). A CXXC motif is present at residues 32-35; that stretch reads CQTC. Disulfide bonds link cysteine 32/cysteine 35, cysteine 141/cysteine 155, cysteine 149/cysteine 167, and cysteine 169/cysteine 178. Residues 139–179 enclose the EGF-like 1 domain; the sequence is LSCPGGTEKPCSGNGQCNGDGTRFGTGVCDCYTSYGGPVCM. FU repeat units follow at residues 194 to 243 and 254 to 301; these read HLVC…DHCK and SYEC…ELPK. A CXXC motif is present at residues 264 to 267; it reads CIGC. 4 disulfides stabilise this stretch: cysteine 264-cysteine 267, cysteine 295-cysteine 309, cysteine 302-cysteine 318, and cysteine 320-cysteine 331. One can recognise an EGF-like 2; calcium-binding domain in the interval 291–332; the sequence is DVDECDSELPKCKGSHEECVNTEGSFTCVCEKDYSRIDGMCR. A helical transmembrane segment spans residues 353–373; it reads VVVLQQMFFGVVICALATLAA. Lysine 374 is a topological domain (cytoplasmic). A helical membrane pass occupies residues 375–395; the sequence is GDMVFTAIFIGAVAAMAGYWL. At 396 to 410 the chain is on the extracellular side; it reads SEKGDRALDSFMKGR.

This sequence belongs to the CRELD family.

The protein localises to the membrane. It carries out the reaction Catalyzes the rearrangement of -S-S- bonds in proteins.. Functionally, protein disulfide isomerase. Promotes the localization of acetylcholine receptors (AChRs) to the plasma membrane. This Xenopus tropicalis (Western clawed frog) protein is Protein disulfide isomerase CRELD1 (creld1).